Consider the following 102-residue polypeptide: Omega-hexatoxin-Hi2b (102 aa).

A signal peptide spans Met1–Gly23. The propeptide occupies Lys24 to Arg56. 3 cysteine pairs are disulfide-bonded: Cys61/Cys75, Cys68/Cys81, and Cys74/Cys86. Leu98 carries the leucine amide modification. Residues Arg100 to Leu102 constitute a propeptide that is removed on maturation.

It belongs to the neurotoxin 15 family. 02 (omega-actx) subfamily. Expressed by the venom gland.

The protein localises to the secreted. In terms of biological role, potent inhibitor of insect, but not mammalian, voltage-gated calcium channels (Cav). This is Omega-hexatoxin-Hi2b from Hadronyche infensa (Fraser island funnel-web spider).